The chain runs to 507 residues: Histidine ammonia-lyase (507 aa).

Residues 142–144 (ASG) constitute a cross-link (5-imidazolinone (Ala-Gly)). Ser-143 carries the 2,3-didehydroalanine (Ser) modification.

This sequence belongs to the PAL/histidase family. Post-translationally, contains an active site 4-methylidene-imidazol-5-one (MIO), which is formed autocatalytically by cyclization and dehydration of residues Ala-Ser-Gly.

It localises to the cytoplasm. It carries out the reaction L-histidine = trans-urocanate + NH4(+). It participates in amino-acid degradation; L-histidine degradation into L-glutamate; N-formimidoyl-L-glutamate from L-histidine: step 1/3. This is Histidine ammonia-lyase from Maricaulis maris (strain MCS10) (Caulobacter maris).